A 206-amino-acid polypeptide reads, in one-letter code: ATP phosphoribosyltransferase (206 aa).

Belongs to the ATP phosphoribosyltransferase family. Short subfamily. Heteromultimer composed of HisG and HisZ subunits.

The protein resides in the cytoplasm. It catalyses the reaction 1-(5-phospho-beta-D-ribosyl)-ATP + diphosphate = 5-phospho-alpha-D-ribose 1-diphosphate + ATP. The protein operates within amino-acid biosynthesis; L-histidine biosynthesis; L-histidine from 5-phospho-alpha-D-ribose 1-diphosphate: step 1/9. Its function is as follows. Catalyzes the condensation of ATP and 5-phosphoribose 1-diphosphate to form N'-(5'-phosphoribosyl)-ATP (PR-ATP). Has a crucial role in the pathway because the rate of histidine biosynthesis seems to be controlled primarily by regulation of HisG enzymatic activity. This Wolinella succinogenes (strain ATCC 29543 / DSM 1740 / CCUG 13145 / JCM 31913 / LMG 7466 / NCTC 11488 / FDC 602W) (Vibrio succinogenes) protein is ATP phosphoribosyltransferase.